Consider the following 325-residue polypeptide: Serine/threonine-protein kinase CtkA (325 aa).

ATP-binding positions include 21 to 24 (NGNK), Lys37, Gln72, and 88 to 90 (KDF). Positions 160 and 179 each coordinate Mg(2+). ATP is bound at residue Asp179. A disordered region spans residues 296–325 (QHKQAHSNPYDNADDLDNSNEYTPTPKRRR).

Post-translationally, autophosphorylates on either Thr-3 or Thr-7.

The protein resides in the secreted. It localises to the host cytoplasm. It is found in the host cytosol. Its subcellular location is the host nucleus. The catalysed reaction is L-seryl-[protein] + ATP = O-phospho-L-seryl-[protein] + ADP + H(+). It carries out the reaction L-threonyl-[protein] + ATP = O-phospho-L-threonyl-[protein] + ADP + H(+). Virulence factor acting as a pro-inflammatory protein that induces the secretion of the pro-inflammatory cytokines TNF-alpha (tumor necrosis factor-alpha) and IL-8 (interleukin-8) from human macrophages, as well as enhanced translocation of the transcription factor NF-kappa-B complex in macrophages. Is a kinase capable of autophosphorylating itself at a threonine residue near the N-terminus. Also leads to enhanced phosphorylation of the NF-kappa-B p65 subunit (RELA) at 'Ser-276' in human epithelial cancer cells; its kinase activity is required for this enhanced phosphorylation that up-regulates NF-kappa-B activity, but it does not directly phosphorylate this protein. Thus, the kinase activity of CtkA may play an important role in the induction of host inflammatory responses during H.pylori infection. This is Serine/threonine-protein kinase CtkA (ctkA) from Helicobacter pylori (strain J99 / ATCC 700824) (Campylobacter pylori J99).